Here is a 150-residue protein sequence, read N- to C-terminus: Avidin-related protein 7 (150 aa).

A signal peptide spans 1-24; that stretch reads MVHATSPLLLLLLLSLALVAPGLS. The 122-residue stretch at 26–147 folds into the Avidin-like domain; that stretch reads RKCSLTGEWD…GYNNFTRQRT (122 aa). Cys28 and Cys105 are joined by a disulfide. Residues Asn36 and Ser40 each contribute to the biotin site. N-linked (GlcNAc...) asparagine glycosylation is found at Asn41 and Asn54. Positions 57, 59, and 63 each coordinate biotin. The N-linked (GlcNAc...) asparagine glycan is linked to Asn93. Residues Ser95, Ser99, and Asn140 each coordinate biotin. Residue Asn141 is glycosylated (N-linked (GlcNAc...) asparagine).

Belongs to the avidin/streptavidin family. In terms of assembly, homotetramer. Glycosylated.

It localises to the secreted. In terms of biological role, forms a strong non-covalent specific complex with biotin. The chain is Avidin-related protein 7 (AVR7) from Gallus gallus (Chicken).